The chain runs to 666 residues: NAD(P)H-quinone oxidoreductase subunit 5, organellar chromatophore 1 (666 aa).

15 helical membrane passes run 8–28, 41–61, 90–110, 121–141, 145–165, 190–210, 220–240, 259–279, 293–313, 328–348, 396–416, 428–448, 497–517, 542–562, and 643–663; these read LVWLIPILPFIGAFLVGFGLI, AALLLISSVGISAVLSFMVLA, VDPIGATMLALVSTVAILVMV, SYVRFFTYLGLFTSSMLALIL, LLEIYVFWELVGMCSYLLIGF, FLLGILGLFWATNSFDFQIVA, GSIPHWAAIALCLLLFMGPMA, TPISALIHAATMVAAGVFLVA, IIVAVIGTITCFLGASIALIQ, LGYMMLAMGCGAPVAGMFHLI, GITFFIGCVAISGIPPLAGFW, SYPLLWGVGLFTAGLTAFYMF, TLPLVILSVPSVLIGFLGSPW, FLPLAIASVMISTCGIVIATI, and GRPQFYALIIFGGVISLIVIF.

The protein belongs to the complex I subunit 5 family. In terms of assembly, NDH is composed of at least 16 different subunits, 5 of which are encoded in the nucleus.

The protein resides in the plastid. It localises to the organellar chromatophore thylakoid membrane. It catalyses the reaction a plastoquinone + NADH + (n+1) H(+)(in) = a plastoquinol + NAD(+) + n H(+)(out). It carries out the reaction a plastoquinone + NADPH + (n+1) H(+)(in) = a plastoquinol + NADP(+) + n H(+)(out). In terms of biological role, NDH shuttles electrons from NAD(P)H:plastoquinone, via FMN and iron-sulfur (Fe-S) centers, to quinones in the photosynthetic chain and possibly in a chloroplast respiratory chain. The immediate electron acceptor for the enzyme in this species is believed to be plastoquinone. Couples the redox reaction to proton translocation, and thus conserves the redox energy in a proton gradient. The chain is NAD(P)H-quinone oxidoreductase subunit 5, organellar chromatophore 1 (ndhF1) from Paulinella chromatophora.